A 207-amino-acid chain; its full sequence is MPLPDFRLIRLLPLAALVLTACSVTTPKGPGKSPDSPQWRQHQQDVRNLNQYQTRGAFAYISDQQKVYARFFWQQTGQDRYRLLLTNPLGSTELELNAQPGNVQLVDNKGQRYTSDDAEEMIGKLTGMPIPLNSLRQWILGLPGDATDYKLDDQYRLSEITYSQNGKNWKVVYGGYDTKTQPAMPANMELTDGGQRIKLKMDNWIVK.

Residues 1-21 form the signal peptide; that stretch reads MPLPDFRLIRLLPLAALVLTA. Residue Cys-22 is the site of N-palmitoyl cysteine attachment. Cys-22 carries S-diacylglycerol cysteine lipidation.

This sequence belongs to the LolB family. As to quaternary structure, monomer.

Its subcellular location is the cell outer membrane. In terms of biological role, plays a critical role in the incorporation of lipoproteins in the outer membrane after they are released by the LolA protein. The protein is Outer-membrane lipoprotein LolB of Escherichia coli (strain SMS-3-5 / SECEC).